We begin with the raw amino-acid sequence, 200 residues long: ATP synthase subunit s, mitochondrial (200 aa).

The N-terminal 25 residues, 1–25, are a transit peptide targeting the mitochondrion; the sequence is MMMFGKISRQLCSLKKIPWSCDSRY. The tract at residues 1-61 is N-terminal domain; that stretch reads MMMFGKISRQ…SEWLLRCGAK (61 aa). Glycine 59 contacts Mg(2+). LRR repeat units follow at residues 62–87, 88–116, 117–141, and 142–173; these read VRYC…RYKI, QAID…KITL, CKCH…KSLL, and ELEI…LSDL. Threonine 93 is a Mg(2+) binding site.

It belongs to the ATP synthase subunit s family. In terms of assembly, homotetramer. Associates with ATP synthase.

It localises to the mitochondrion. Its subcellular location is the mitochondrion inner membrane. Involved in regulation of mitochondrial membrane ATP synthase. Necessary for H(+) conduction of ATP synthase. Facilitates energy-driven catalysis of ATP synthesis by blocking a proton leak through an alternative proton exit pathway. The polypeptide is ATP synthase subunit s, mitochondrial (Dmac2l) (Mus musculus (Mouse)).